We begin with the raw amino-acid sequence, 142 residues long: MDVEGLVEQVVSGLGFELVDFETSPKGRLMRVFIDIERGVTVDDCATVSNQLTRVFEVENVDYDRLEVSSPGLDRPLKKTADFERFAGDEVQVRLRMPIGNQRNFIGVLEGLSEGVVRLHTDKGDVAFPFDEIEKARLVPKF.

It belongs to the RimP family.

It is found in the cytoplasm. In terms of biological role, required for maturation of 30S ribosomal subunits. This Aromatoleum aromaticum (strain DSM 19018 / LMG 30748 / EbN1) (Azoarcus sp. (strain EbN1)) protein is Ribosome maturation factor RimP.